A 366-amino-acid polypeptide reads, in one-letter code: tRNA 2-selenouridine synthase (366 aa).

The Rhodanese domain maps to 12–136 (FLSGTPMMDV…MRGFLIDVIE (125 aa)). C95 functions as the S-selanylcysteine intermediate in the catalytic mechanism.

The protein belongs to the SelU family. In terms of assembly, monomer.

It catalyses the reaction 5-methylaminomethyl-2-thiouridine(34) in tRNA + selenophosphate + (2E)-geranyl diphosphate + H2O + H(+) = 5-methylaminomethyl-2-selenouridine(34) in tRNA + (2E)-thiogeraniol + phosphate + diphosphate. It carries out the reaction 5-methylaminomethyl-2-thiouridine(34) in tRNA + (2E)-geranyl diphosphate = 5-methylaminomethyl-S-(2E)-geranyl-thiouridine(34) in tRNA + diphosphate. The catalysed reaction is 5-methylaminomethyl-S-(2E)-geranyl-thiouridine(34) in tRNA + selenophosphate + H(+) = 5-methylaminomethyl-2-(Se-phospho)selenouridine(34) in tRNA + (2E)-thiogeraniol. The enzyme catalyses 5-methylaminomethyl-2-(Se-phospho)selenouridine(34) in tRNA + H2O = 5-methylaminomethyl-2-selenouridine(34) in tRNA + phosphate. Its function is as follows. Involved in the post-transcriptional modification of the uridine at the wobble position (U34) of tRNA(Lys), tRNA(Glu) and tRNA(Gln). Catalyzes the conversion of 2-thiouridine (S2U-RNA) to 2-selenouridine (Se2U-RNA). Acts in a two-step process involving geranylation of 2-thiouridine (S2U) to S-geranyl-2-thiouridine (geS2U) and subsequent selenation of the latter derivative to 2-selenouridine (Se2U) in the tRNA chain. The protein is tRNA 2-selenouridine synthase of Cupriavidus pinatubonensis (strain JMP 134 / LMG 1197) (Cupriavidus necator (strain JMP 134)).